Here is a 110-residue protein sequence, read N- to C-terminus: Large ribosomal subunit protein uL22 (110 aa).

Belongs to the universal ribosomal protein uL22 family. As to quaternary structure, part of the 50S ribosomal subunit.

Its function is as follows. This protein binds specifically to 23S rRNA; its binding is stimulated by other ribosomal proteins, e.g. L4, L17, and L20. It is important during the early stages of 50S assembly. It makes multiple contacts with different domains of the 23S rRNA in the assembled 50S subunit and ribosome. Functionally, the globular domain of the protein is located near the polypeptide exit tunnel on the outside of the subunit, while an extended beta-hairpin is found that lines the wall of the exit tunnel in the center of the 70S ribosome. This Photorhabdus laumondii subsp. laumondii (strain DSM 15139 / CIP 105565 / TT01) (Photorhabdus luminescens subsp. laumondii) protein is Large ribosomal subunit protein uL22.